The primary structure comprises 361 residues: Alanine racemase 2 (361 aa).

Lys-30 serves as the catalytic Proton acceptor; specific for D-alanine. Lys-30 carries the post-translational modification N6-(pyridoxal phosphate)lysine. Arg-122 is a binding site for substrate. Tyr-256 (proton acceptor; specific for L-alanine) is an active-site residue. Residue Met-303 participates in substrate binding.

Belongs to the alanine racemase family. The cofactor is pyridoxal 5'-phosphate.

The enzyme catalyses L-alanine = D-alanine. It participates in amino-acid biosynthesis; D-alanine biosynthesis; D-alanine from L-alanine: step 1/1. Its function is as follows. Catalyzes the interconversion of L-alanine and D-alanine. May also act on other amino acids. The sequence is that of Alanine racemase 2 (alr2) from Staphylococcus aureus (strain Mu50 / ATCC 700699).